Consider the following 291-residue polypeptide: 11-beta-hydroxysteroid dehydrogenase 1 (291 aa).

Topologically, residues 1–7 (MAFMKTH) are cytoplasmic. The chain crosses the membrane as a helical; Signal-anchor for type II membrane protein span at residues 8–24 (LLPILGLFMAYYYYSAY). At 25-291 (EEFRPEMLQG…TSYSTDGLIN (267 aa)) the chain is on the lumenal side. Residues 41-67 (GASK…TARS), 92-93 (TM), and 119-121 (NHI) each bind NADP(+). N-linked (GlcNAc...) asparagine glycosylation is found at Asn-123 and Asn-162. Position 170 (Ser-170) interacts with substrate. Tyr-183 functions as the Proton acceptor in the catalytic mechanism. Residue 183–187 (YSASK) coordinates NADP(+). The N-linked (GlcNAc...) asparagine glycan is linked to Asn-207. 218–222 (IDTDT) is a binding site for NADP(+).

The protein belongs to the short-chain dehydrogenases/reductases (SDR) family. Homodimer. In terms of tissue distribution, abundantly expressed in the liver, followed by fibroblasts, also detected in the brain, lung, heart, and ovary, and in smaller amounts in kidney, skin, and spleen.

It is found in the endoplasmic reticulum membrane. The enzyme catalyses an 11beta-hydroxysteroid + NADP(+) = an 11-oxosteroid + NADPH + H(+). The catalysed reaction is cortisone + NADPH + H(+) = cortisol + NADP(+). It catalyses the reaction corticosterone + NADP(+) = 11-dehydrocorticosterone + NADPH + H(+). It carries out the reaction a 7beta-hydroxysteroid + NADP(+) = a 7-oxosteroid + NADPH + H(+). The enzyme catalyses 7-oxocholesterol + NADPH + H(+) = 7beta-hydroxycholesterol + NADP(+). The catalysed reaction is chenodeoxycholate + NADP(+) = 7-oxolithocholate + NADPH + H(+). It catalyses the reaction 7-oxolithocholate + NADPH + H(+) = ursodeoxycholate + NADP(+). It carries out the reaction glycochenodeoxycholate + NADP(+) = 7-oxoglycolithocholate + NADPH + H(+). The enzyme catalyses taurochenodeoxycholate + NADP(+) = 7-oxotaurolithocholate + NADPH + H(+). The catalysed reaction is tauroursodeoxycholate + NADP(+) = 7-oxotaurolithocholate + NADPH + H(+). It catalyses the reaction glycoursodeoxycholate + NADP(+) = 7-oxoglycolithocholate + NADPH + H(+). It carries out the reaction 7-oxopregnenolone + NADPH + H(+) = 7beta-hydroxypregnenolone + NADP(+). The enzyme catalyses 3beta,7alpha-dihydroxyandrost-5-en-17-one + NADP(+) = 3beta-hydroxy-5-androstene-7,17-dione + NADPH + H(+). The catalysed reaction is 3beta-hydroxy-5-androstene-7,17-dione + NADPH + H(+) = 3beta,7beta-dihydroxyandrost-5-en-17-one + NADP(+). It catalyses the reaction 3beta-hydroxy-5alpha-androstane-7,17-dione + NADPH + H(+) = 3beta,7beta-dihydroxy-5alpha-androstan-17-one + NADP(+). The protein operates within steroid metabolism. Functionally, controls the reversible conversion of biologically active glucocorticoids such as cortisone to cortisol, and 11-dehydrocorticosterone to corticosterone in the presence of NADP(H). Participates in the corticosteroid receptor-mediated anti-inflammatory response, as well as metabolic and homeostatic processes. Bidirectional in vitro, predominantly functions as a reductase in vivo, thereby increasing the concentration of active glucocorticoids. It has broad substrate specificity, besides glucocorticoids, it accepts other steroid and sterol substrates. Interconverts 7-oxo- and 7-hydroxy-neurosteroids such as 7-oxopregnenolone and 7beta-hydroxypregnenolone, 7-oxodehydroepiandrosterone (3beta-hydroxy-5-androstene-7,17-dione) and 7beta-hydroxydehydroepiandrosterone (3beta,7beta-dihydroxyandrost-5-en-17-one), among others. Catalyzes the stereo-specific conversion of the major dietary oxysterol, 7-ketocholesterol (7-oxocholesterol), into the more polar 7-beta-hydroxycholesterol metabolite. 7-oxocholesterol is one of the most important oxysterols, it participates in several events such as induction of apoptosis, accumulation in atherosclerotic lesions, lipid peroxidation, and induction of foam cell formation. Mediates the 7-oxo reduction of 7-oxolithocholate mainly to chenodeoxycholate, and to a lesser extent to ursodeoxycholate, both in its free form and when conjugated to glycine or taurine, providing a link between glucocorticoid activation and bile acid metabolism. Catalyzes the synthesis of 7-beta-25-dihydroxycholesterol from 7-oxo-25-hydroxycholesterol in vitro, which acts as a ligand for the G-protein-coupled receptor (GPCR) Epstein-Barr virus-induced gene 2 (EBI2) and may thereby regulate immune cell migration. This is 11-beta-hydroxysteroid dehydrogenase 1 (HSD11B1) from Saimiri sciureus (Common squirrel monkey).